Here is a 311-residue protein sequence, read N- to C-terminus: Retron Ec78 reverse transcriptase (311 aa).

Positions 15–241 constitute a Reverse transcriptase domain; it reads DSGISAFLVT…HNRHVTGVTI (227 aa). 3 residues coordinate Mg(2+): aspartate 96, aspartate 187, and aspartate 188.

It belongs to the bacterial reverse transcriptase family.

It catalyses the reaction DNA(n) + a 2'-deoxyribonucleoside 5'-triphosphate = DNA(n+1) + diphosphate. In terms of biological role, reverse transcriptase (RT) component of antiviral defense system retron Ec78, composed of a non-coding RNA (ncRNA), this reverse transcriptase (RT), a probable ATPase and a putative HNH endonuclease. Expression of retron Ec78 confers protection against bacteriophage T5. At multiplicity of infection (MOI) of 0.02 cultures slow growth when infected with T5 but do not collapse, at MOI 2 cultures enter growth stasis. Responsible for synthesis of msDNA-Ec78 (a linear ssDNA with a 5'-terminal phosphate residue). Unlike most known msDNAs the mature product does not have an RNA component. The retron transcript serves as primer and template for the reaction, and codes for the RT. Not mutagenic when cloned in E.coli. It is thought to be synthesized as a branched RNA with a 2',5'-phosphodiester linkage to ssDNA; the linkage is cleaved endonucleolytically by ExoVII (xseA-xseB) leaving the observed mature 5'-ssDNA terminus. Overexpression of the ncRNA and RT, which leads to increased levels of msDNA, is not mutagenic in vivo. As the stem in the msDNA does not have a mismatch it probably does not bind or sequester MutS and/or MutL. This chain is Retron Ec78 reverse transcriptase, found in Escherichia coli.